The primary structure comprises 81 residues: Exodeoxyribonuclease 7 small subunit (81 aa).

Belongs to the XseB family. As to quaternary structure, heterooligomer composed of large and small subunits.

The protein resides in the cytoplasm. The enzyme catalyses Exonucleolytic cleavage in either 5'- to 3'- or 3'- to 5'-direction to yield nucleoside 5'-phosphates.. Its function is as follows. Bidirectionally degrades single-stranded DNA into large acid-insoluble oligonucleotides, which are then degraded further into small acid-soluble oligonucleotides. This Nitratidesulfovibrio vulgaris (strain ATCC 29579 / DSM 644 / CCUG 34227 / NCIMB 8303 / VKM B-1760 / Hildenborough) (Desulfovibrio vulgaris) protein is Exodeoxyribonuclease 7 small subunit.